A 324-amino-acid polypeptide reads, in one-letter code: Elongation factor Ts, mitochondrial (324 aa).

The N-terminal 44 residues, 1–44, are a transit peptide targeting the mitochondrion; that stretch reads MSLLRSLRFFPVACTGRSARAVLLQPSQPWHTLHAGPSLSSSAS. 2 positions are modified to N6-succinyllysine: Lys75 and Lys132. Ser269 carries the phosphoserine modification.

Belongs to the EF-Ts family.

The protein resides in the mitochondrion. Associates with the EF-Tu.GDP complex and induces the exchange of GDP to GTP. It remains bound to the aminoacyl-tRNA.EF-Tu.GTP complex up to the GTP hydrolysis stage on the ribosome. This Rattus norvegicus (Rat) protein is Elongation factor Ts, mitochondrial (Tsfm).